The primary structure comprises 304 residues: Small ribosomal subunit protein uS3 (304 aa).

A KH type-2 domain is found at 17–86; it reads IDEFFAEELG…DPQVDVQEVD (70 aa). Residues 216–304 are disordered; the sequence is LLEGEPEDSE…DEMDEEGDDE (89 aa).

The protein belongs to the universal ribosomal protein uS3 family. In terms of assembly, part of the 30S ribosomal subunit.

Functionally, binds the lower part of the 30S subunit head. This Haloarcula marismortui (strain ATCC 43049 / DSM 3752 / JCM 8966 / VKM B-1809) (Halobacterium marismortui) protein is Small ribosomal subunit protein uS3.